Here is a 308-residue protein sequence, read N- to C-terminus: UDP-N-acetylenolpyruvoylglucosamine reductase (308 aa).

Residues 24 to 187 (RVGGPADWLF…VSASLQGVPG (164 aa)) enclose the FAD-binding PCMH-type domain. The active site involves R167. Residues 199–230 (QLDKRDQTQPTKERSAGSTFRNPAGFSSTGRA) are disordered. Positions 200–213 (LDKRDQTQPTKERS) are enriched in basic and acidic residues. A compositionally biased stretch (polar residues) spans 214–228 (AGSTFRNPAGFSSTG). S216 serves as the catalytic Proton donor. E298 is an active-site residue.

It belongs to the MurB family. The cofactor is FAD.

It is found in the cytoplasm. It catalyses the reaction UDP-N-acetyl-alpha-D-muramate + NADP(+) = UDP-N-acetyl-3-O-(1-carboxyvinyl)-alpha-D-glucosamine + NADPH + H(+). It participates in cell wall biogenesis; peptidoglycan biosynthesis. Functionally, cell wall formation. This is UDP-N-acetylenolpyruvoylglucosamine reductase from Ruegeria pomeroyi (strain ATCC 700808 / DSM 15171 / DSS-3) (Silicibacter pomeroyi).